Consider the following 954-residue polypeptide: Glycine dehydrogenase (decarboxylating) (954 aa).

An N6-(pyridoxal phosphate)lysine modification is found at Lys-701.

It belongs to the GcvP family. In terms of assembly, the glycine cleavage system is composed of four proteins: P, T, L and H. Requires pyridoxal 5'-phosphate as cofactor.

The enzyme catalyses N(6)-[(R)-lipoyl]-L-lysyl-[glycine-cleavage complex H protein] + glycine + H(+) = N(6)-[(R)-S(8)-aminomethyldihydrolipoyl]-L-lysyl-[glycine-cleavage complex H protein] + CO2. Its function is as follows. The glycine cleavage system catalyzes the degradation of glycine. The P protein binds the alpha-amino group of glycine through its pyridoxal phosphate cofactor; CO(2) is released and the remaining methylamine moiety is then transferred to the lipoamide cofactor of the H protein. The protein is Glycine dehydrogenase (decarboxylating) of Bordetella pertussis (strain Tohama I / ATCC BAA-589 / NCTC 13251).